The sequence spans 765 residues: MAKKHRYTTVQRKQERQKEEEYIKELEQRIQDYDVKNNKAVFFKDLPISKSTLKGLNEASFIKMTDIQRDSIVTSLQGHDVFGTAKTGSGKTLAFLVPVLEKLYRERWTEFDGLGALIISPTRELAMQIYEVLVKIGSHTQFSAGLVIGGKDVNFELERIAKINILIGTPGRILQHMDQAVGLNTSNLQMLVLDEADRCLDMGFQKTLDAIVGNLPPDRQTLLFSATQSQSISDLARLSLTDYKKIGTIDSSEDGPATPKTLQQSYIIADLADKLDVLYSFIKSHLKTKMIVFFSSSKQVHFVYETFRKMQPGISLLHLHGRQKQRARTETLDKFFRAQQVCLFATDVVARGIDFPAVDWVIQVDCPEDVDTYIHRVGRAARYGKKGRSLIILTPQEEAFLTRMAAKKIEPGKLTIKQSKKKSIKPQLQSLLFKDPELKYLGQKAFISYVKSIYIQKDKEVFKFDELPTEEFANSLGLPGAPRIKIKGMKAIEQAKKLKNTSRSLLSLSKANDDGEINDKKDKQVRTKYDKMFERKNQTILSEHYLNITKSQAQEDEDEDFITVKRKDHELKEEDLPQLTVPTSRRAQKKALSKKASLSTKGNATKMVFDDEGQAHPVYELEGEEEFHKKGDAEEQKKEFLSKEAEIMADRDVSDKIIQKEKKQEKKRKRLEAMRREMEAAYADEYSDEDEEGGNVAYLGTGNLSDDMEEYSSDEESRKTKKSKTVDYRFDKKNKTISEDTDIMEIQEPETIEDLESLTARLIEG.

Positions 41–69 (VFFKDLPISKSTLKGLNEASFIKMTDIQR) match the Q motif motif. A Helicase ATP-binding domain is found at 72-246 (IVTSLQGHDV…RLSLTDYKKI (175 aa)). Residue 85–92 (AKTGSGKT) coordinates ATP. A DEAD box motif is present at residues 194 to 197 (DEAD). A Helicase C-terminal domain is found at 274-432 (KLDVLYSFIK…SIKPQLQSLL (159 aa)). Disordered stretches follow at residues 575–615 (DLPQ…EGQA) and 682–725 (YADE…KSKT).

Belongs to the DEAD box helicase family. DDX10/DBP4 subfamily. As to quaternary structure, interacts with the U3 and U14 snoRNAs. Associates with pre-ribosomal complexes.

It localises to the nucleus. The protein resides in the nucleolus. The enzyme catalyses ATP + H2O = ADP + phosphate + H(+). Its function is as follows. ATP-dependent RNA helicase required for ribosome biogenesis. Involved in the release of U14 snoRNA in pre-ribosomal complexes. Required for pre-rRNA cleavage at site A2. The chain is ATP-dependent RNA helicase DBP4 (DBP4) from Candida glabrata (strain ATCC 2001 / BCRC 20586 / JCM 3761 / NBRC 0622 / NRRL Y-65 / CBS 138) (Yeast).